A 497-amino-acid polypeptide reads, in one-letter code: Keratin, type II cytoskeletal 8 (497 aa).

Residues 2-108 form a head region; the sequence is TSYQRTVTVR…DPRIGQVRLE (107 aa). Residues 109-149 are coil 1A; sequence EKEQIKTLNNQFAGFIDKVRYLEQQNKLLETKWQLLQNQTT. Positions 109 to 421 constitute an IF rod domain; that stretch reads EKEQIKTLNN…KLLEGEESRL (313 aa). The tract at residues 145–162 is linker 1; it reads QNQTTPSRSNLDSMFEAY. The segment at 163 to 254 is coil 1B; that stretch reads ISNLRRQLDT…QIYDEEIREL (92 aa). Positions 255–278 are linker 12; the sequence is QTQIQDTSVIVQMDNNRQLDLDNI. The coil 2 stretch occupies residues 279–417; sequence IAEVRAQYED…ATYRKLLEGE (139 aa). Residues 418 to 497 form a tail region; it reads ESRLASGIQA…VSERSNIVKE (80 aa).

Belongs to the intermediate filament family. In terms of assembly, heterotetramer of two type I and two type II keratins. Keratin-8 associates with keratin-18. In terms of tissue distribution, expressed in skin.

Its subcellular location is the cytoplasm. It localises to the nucleus. It is found in the nucleoplasm. The protein resides in the nucleus matrix. Its function is as follows. Together with KRT19, helps to link the contractile apparatus to dystrophin at the costameres of striated muscle. In Protopterus aethiopicus (Marbled lungfish), this protein is Keratin, type II cytoskeletal 8.